We begin with the raw amino-acid sequence, 65 residues long: MPKMKSKSSAKKRFTVRAGGTIKRGQAFKRHILTKKTTKNKRHLRGSTEVAKADVKSIRSMLPYA.

The protein belongs to the bacterial ribosomal protein bL35 family.

This is Large ribosomal subunit protein bL35 from Polynucleobacter asymbioticus (strain DSM 18221 / CIP 109841 / QLW-P1DMWA-1) (Polynucleobacter necessarius subsp. asymbioticus).